We begin with the raw amino-acid sequence, 601 residues long: Elongation factor 4 (601 aa).

Residues 6–188 form the tr-type G domain; that stretch reads NYIRNFSIVA…AIVRQLPPPH (183 aa). Residues 18–23 and 135–138 contribute to the GTP site; these read DHGKST and NKVD.

The protein belongs to the TRAFAC class translation factor GTPase superfamily. Classic translation factor GTPase family. LepA subfamily.

It localises to the cell inner membrane. The catalysed reaction is GTP + H2O = GDP + phosphate + H(+). Required for accurate and efficient protein synthesis under certain stress conditions. May act as a fidelity factor of the translation reaction, by catalyzing a one-codon backward translocation of tRNAs on improperly translocated ribosomes. Back-translocation proceeds from a post-translocation (POST) complex to a pre-translocation (PRE) complex, thus giving elongation factor G a second chance to translocate the tRNAs correctly. Binds to ribosomes in a GTP-dependent manner. This is Elongation factor 4 from Bartonella quintana (strain Toulouse) (Rochalimaea quintana).